Consider the following 446-residue polypeptide: Bifunctional protein GlmU (446 aa).

The tract at residues methionine 1–arginine 226 is pyrophosphorylase. UDP-N-acetyl-alpha-D-glucosamine-binding positions include leucine 7–glycine 10, lysine 21, glutamine 73, and glycine 78–threonine 79. A Mg(2+)-binding site is contributed by aspartate 103. UDP-N-acetyl-alpha-D-glucosamine-binding residues include glycine 140, glutamate 155, asparagine 170, and asparagine 224. Position 224 (asparagine 224) interacts with Mg(2+). Residues cysteine 227–glutamate 247 form a linker region. Residues glycine 248 to glutamine 446 are N-acetyltransferase. Residues arginine 329 and lysine 347 each coordinate UDP-N-acetyl-alpha-D-glucosamine. Histidine 359 serves as the catalytic Proton acceptor. Residues tyrosine 362 and asparagine 373 each coordinate UDP-N-acetyl-alpha-D-glucosamine. Residues alanine 376, asparagine 382–tyrosine 383, alanine 419, and arginine 436 contribute to the acetyl-CoA site.

The protein in the N-terminal section; belongs to the N-acetylglucosamine-1-phosphate uridyltransferase family. It in the C-terminal section; belongs to the transferase hexapeptide repeat family. As to quaternary structure, homotrimer. Mg(2+) is required as a cofactor.

The protein resides in the cytoplasm. The catalysed reaction is alpha-D-glucosamine 1-phosphate + acetyl-CoA = N-acetyl-alpha-D-glucosamine 1-phosphate + CoA + H(+). The enzyme catalyses N-acetyl-alpha-D-glucosamine 1-phosphate + UTP + H(+) = UDP-N-acetyl-alpha-D-glucosamine + diphosphate. The protein operates within nucleotide-sugar biosynthesis; UDP-N-acetyl-alpha-D-glucosamine biosynthesis; N-acetyl-alpha-D-glucosamine 1-phosphate from alpha-D-glucosamine 6-phosphate (route II): step 2/2. It participates in nucleotide-sugar biosynthesis; UDP-N-acetyl-alpha-D-glucosamine biosynthesis; UDP-N-acetyl-alpha-D-glucosamine from N-acetyl-alpha-D-glucosamine 1-phosphate: step 1/1. It functions in the pathway bacterial outer membrane biogenesis; LPS lipid A biosynthesis. Functionally, catalyzes the last two sequential reactions in the de novo biosynthetic pathway for UDP-N-acetylglucosamine (UDP-GlcNAc). The C-terminal domain catalyzes the transfer of acetyl group from acetyl coenzyme A to glucosamine-1-phosphate (GlcN-1-P) to produce N-acetylglucosamine-1-phosphate (GlcNAc-1-P), which is converted into UDP-GlcNAc by the transfer of uridine 5-monophosphate (from uridine 5-triphosphate), a reaction catalyzed by the N-terminal domain. The sequence is that of Bifunctional protein GlmU from Prochlorococcus marinus (strain MIT 9313).